A 161-amino-acid chain; its full sequence is 6,7-dimethyl-8-ribityllumazine synthase (161 aa).

5-amino-6-(D-ribitylamino)uracil contacts are provided by residues Trp26, 58–60, and 81–83; these read SFE and VVI. 86–87 serves as a coordination point for (2S)-2-hydroxy-3-oxobutyl phosphate; it reads GT. His89 (proton donor) is an active-site residue. 5-amino-6-(D-ribitylamino)uracil is bound at residue Phe114. Arg128 serves as a coordination point for (2S)-2-hydroxy-3-oxobutyl phosphate.

This sequence belongs to the DMRL synthase family.

It catalyses the reaction (2S)-2-hydroxy-3-oxobutyl phosphate + 5-amino-6-(D-ribitylamino)uracil = 6,7-dimethyl-8-(1-D-ribityl)lumazine + phosphate + 2 H2O + H(+). It participates in cofactor biosynthesis; riboflavin biosynthesis; riboflavin from 2-hydroxy-3-oxobutyl phosphate and 5-amino-6-(D-ribitylamino)uracil: step 1/2. In terms of biological role, catalyzes the formation of 6,7-dimethyl-8-ribityllumazine by condensation of 5-amino-6-(D-ribitylamino)uracil with 3,4-dihydroxy-2-butanone 4-phosphate. This is the penultimate step in the biosynthesis of riboflavin. The protein is 6,7-dimethyl-8-ribityllumazine synthase of Streptomyces avermitilis (strain ATCC 31267 / DSM 46492 / JCM 5070 / NBRC 14893 / NCIMB 12804 / NRRL 8165 / MA-4680).